The primary structure comprises 3590 residues: Filamentous hemagglutinin (3590 aa).

2 disordered regions span residues 3256 to 3309 and 3417 to 3498; these read GGGS…VEVS and APPP…GRHV. The span at 3289–3299 shows a compositional bias: pro residues; the sequence is PSRPTTPPASP. Over residues 3300-3309 the composition is skewed to low complexity; that stretch reads QPIRATVEVS. Residues 3417 to 3432 show a composition bias toward pro residues; that stretch reads APPPVVETAQPLPPVK.

The protein localises to the cell surface. Its function is as follows. Evidence for a role in host-cell binding and infection. The polypeptide is Filamentous hemagglutinin (fhaB) (Bordetella pertussis (strain Tohama I / ATCC BAA-589 / NCTC 13251)).